We begin with the raw amino-acid sequence, 1160 residues long: Nck-associated protein 1 homolog (1160 aa).

It belongs to the HEM-1/HEM-2 family. Part of a Scar/WAVE complex containing brk1, scrA, abiA, pirA and napA.

In terms of biological role, involved in regulation of actin and microtubule organization. Involved in cell adhesion. This chain is Nck-associated protein 1 homolog (napA), found in Dictyostelium discoideum (Social amoeba).